Reading from the N-terminus, the 637-residue chain is Probable ATP-binding protein YheS (637 aa).

2 ABC transporter domains span residues 2 to 246 (IVFS…AQQQ) and 313 to 527 (LKME…KQEN). ATP-binding positions include 34-41 (GKNGCGKS) and 345-352 (GRNGAGKS). The segment at 523-559 (QKQENQTDEAPKENANSAQARKDQKRREAELRAQTQP) is disordered. The segment covering 542 to 553 (ARKDQKRREAEL) has biased composition (basic and acidic residues).

Belongs to the ABC transporter superfamily. ABCF family. YheS subfamily.

In terms of biological role, genetic data indicate it may be involved in ribosome assembly or function. Ectopic expression exacerbates the cold-sensitive growth phenotype of a bipA deletion. This Escherichia coli O6:H1 (strain CFT073 / ATCC 700928 / UPEC) protein is Probable ATP-binding protein YheS (yheS).